Consider the following 124-residue polypeptide: Acidic phospholipase A2 (124 aa).

7 cysteine pairs are disulfide-bonded: cysteine 26–cysteine 116, cysteine 28–cysteine 44, cysteine 43–cysteine 95, cysteine 49–cysteine 124, cysteine 50–cysteine 88, cysteine 57–cysteine 81, and cysteine 75–cysteine 86. Ca(2+)-binding residues include tyrosine 27, glycine 29, and glycine 31. The active site involves histidine 47. Ca(2+) is bound at residue aspartate 48. The active site involves aspartate 89.

Belongs to the phospholipase A2 family. Group II subfamily. D49 sub-subfamily. Monomer. It depends on Ca(2+) as a cofactor. In terms of tissue distribution, expressed by the venom gland.

The protein resides in the secreted. It catalyses the reaction a 1,2-diacyl-sn-glycero-3-phosphocholine + H2O = a 1-acyl-sn-glycero-3-phosphocholine + a fatty acid + H(+). In terms of biological role, snake venom phospholipase A2 (PLA2) that acts in vivo as an anti-thrombotic agent. Inhibits platelet aggregation induced by ADP, arachidonic acid, and thrombin. PLA2 catalyzes the calcium-dependent hydrolysis of the 2-acyl groups in 3-sn-phosphoglycerides. This Gloydius halys (Chinese water mocassin) protein is Acidic phospholipase A2.